The sequence spans 95 residues: Transcription and mRNA export factor ENY2-1 (95 aa).

Belongs to the ENY2 family. As to quaternary structure, component of the nuclear pore complex (NPC)-associated TREX-2 complex (transcription and export complex 2). Component of the SAGA transcription coactivator-HAT complex. Within the SAGA complex, participates in a subcomplex of SAGA called the DUB module (deubiquitination module).

Its subcellular location is the nucleus. It is found in the nucleoplasm. Its function is as follows. Involved in mRNA export coupled transcription activation by association with both the TREX-2 and the SAGA complexes. The transcription regulatory histone acetylation (HAT) complex SAGA is a multiprotein complex that activates transcription by remodeling chromatin and mediating histone acetylation and deubiquitination. Within the SAGA complex, participates in a subcomplex that specifically deubiquitinates histones. The SAGA complex is recruited to specific gene promoters by activators, where it is required for transcription. The TREX-2 complex functions in docking export-competent ribonucleoprotein particles (mRNPs) to the nuclear entrance of the nuclear pore complex (nuclear basket). TREX-2 participates in mRNA export and accurate chromatin positioning in the nucleus by tethering genes to the nuclear periphery. The sequence is that of Transcription and mRNA export factor ENY2-1 (eny2-1) from Salmo salar (Atlantic salmon).